Consider the following 339-residue polypeptide: MNDLTKKSVEELKKLEEESRAELFALRFQSAMGNLEKPHRIGELKNQIARILTILSARKNSGENTAINVKVNLNETYAKIEKESQAFAKQRKAKIEQMMAEQQAAEGKMANLMDLPVNDAMDLTEEQAVVSTPTGETNGLDEQKAPVAAKKPAAAKDFPKQKDVVEEKTATGKPAAPSAKKAPVAKKDVAQETKTDKDAALKALIKEKAAAKKPAAKSKTSTPSGKTTVTVKSVTSAKADIEVPKETSKPVPTKTVKKAAELNAKEKLVAIKSSVAMGGTAKEPGSGVKIDLELKAKDPNAKEYTYGTNWKENRDKILTASKTTKKADDKTTKKGTGKK.

The segment at 1–96 (MNDLTKKSVE…FAKQRKAKIE (96 aa)) is large ribosomal subunit protein uL29. The segment at 97–339 (QMMAEQQAAE…KTTKKGTGKK (243 aa)) is unknown. 2 disordered regions span residues 129-254 (VVST…VPTK) and 311-339 (KENR…TGKK). The segment covering 145-156 (APVAAKKPAAAK) has biased composition (low complexity). Residues 157–170 (DFPKQKDVVEEKTA) are compositionally biased toward basic and acidic residues. Low complexity predominate over residues 171–182 (TGKPAAPSAKKA). Basic and acidic residues predominate over residues 185–210 (AKKDVAQETKTDKDAALKALIKEKAA). The segment covering 217–238 (KSKTSTPSGKTTVTVKSVTSAK) has biased composition (low complexity). Basic and acidic residues predominate over residues 239–248 (ADIEVPKETS).

Belongs to the universal ribosomal protein uL29 family. In terms of assembly, forms homomultimers. Part of the ribosome; radioactive IRS binds to purified ribosomes.

Specifically binds a DNA inverted repeat sequence (IRS) found downstream of rpsB in one of the ribosomal subunit operons (for genes rpsB, tsf, and unknown gene x). Might be involved in regulation of transcription of the rpsB operon; the IRS may be a control element to attenuate transcription. This is Large ribosomal subunit protein uL29 from Spiroplasma citri.